A 690-amino-acid chain; its full sequence is Xylosyl- and glucuronyltransferase LARGE2 (690 aa).

Topologically, residues 1–7 are cytoplasmic; that stretch reads MLPRGRP. A helical; Signal-anchor for type II membrane protein membrane pass occupies residues 8 to 28; the sequence is RALGAALLLLLLLVVGFFLFG. Residues 29 to 690 lie on the Lumenal side of the membrane; it reads RDPEYGLGTT…TALQQSRSRA (662 aa). 2 N-linked (GlcNAc...) asparagine glycosylation sites follow: Asn50 and Asn77. Residues 67–342 form a xylosyltransferase activity region; the sequence is LHVAIVCAGY…FLGFDGKLLC (276 aa). Mn(2+) contacts are provided by Asp171 and Asp173. Asn201 carries N-linked (GlcNAc...) asparagine glycosylation. The segment at 343–686 is glucuronyltransferase activity; it reads RELFGCPNQF…LKYLTALQQS (344 aa). 2 residues coordinate Mn(2+): Asp491 and Asp493.

In the C-terminal section; belongs to the glycosyltransferase 49 family. This sequence in the N-terminal section; belongs to the glycosyltransferase 8 family. As to quaternary structure, interacts with B4GAT1. It depends on Mn(2+) as a cofactor.

It localises to the golgi apparatus membrane. It carries out the reaction 3-O-[beta-D-GlcA-(1-&gt;3)-beta-D-Xyl-(1-&gt;4)-Rib-ol-P-Rib-ol-P-3-beta-D-GalNAc-(1-&gt;3)-beta-D-GlcNAc-(1-&gt;4)-(O-6-P-alpha-D-Man)]-Thr-[protein] + UDP-alpha-D-xylose = 3-O-[alpha-D-Xyl-(1-&gt;3)-beta-D-GlcA-(1-&gt;4)-beta-D-Xyl-(1-&gt;4)-Rib-ol-P-Rib-ol-P-3-beta-D-GalNAc-(1-&gt;3)-beta-D-GlcNAc-(1-&gt;4)-(O-6-P-alpha-D-Man)]-Thr-[protein] + UDP + H(+). It catalyses the reaction 3-O-{(1-&gt;[3)-alpha-D-Xyl-(1-&gt;3)-beta-D-GlcA-(1-&gt;](n)-4)-beta-D-Xyl-(1-&gt;4)-Rib-ol-P-Rib-ol-P-3-beta-D-GalNAc-(1-&gt;3)-beta-D-GlcNAc-(1-&gt;4)-O-6-P-alpha-D-Man}-L-Thr-[protein] + UDP-alpha-D-glucuronate = 3-O-{beta-D-GlcA-(1-&gt;[3)-alpha-D-Xyl-(1-&gt;3)-beta-D-GlcA-(1-&gt;](n)-4)-beta-D-Xyl-(1-&gt;4)-Rib-ol-P-Rib-ol-P-3-beta-D-GalNAc-(1-&gt;3)-beta-D-GlcNAc-(1-&gt;4)-O-6-P-alpha-D-Man}-L-Thr-[protein] + UDP + H(+). The enzyme catalyses 3-O-{beta-D-GlcA-(1-&gt;[3)-alpha-D-Xyl-(1-&gt;3)-beta-D-GlcA-(1-&gt;](n)-4)-beta-D-Xyl-(1-&gt;4)-Rib-ol-P-Rib-ol-P-3-beta-D-GalNAc-(1-&gt;3)-beta-D-GlcNAc-(1-&gt;4)-O-6-P-alpha-D-Man}-L-Thr-[protein] + UDP-alpha-D-xylose = 3-O-{(1-&gt;[3)-alpha-D-Xyl-(1-&gt;3)-beta-D-GlcA-(1-&gt;](n+1)-4)-beta-D-Xyl-(1-&gt;4)-Rib-ol-P-Rib-ol-P-3-beta-D-GalNAc-(1-&gt;3)-beta-D-GlcNAc-(1-&gt;4)-O-6-P-alpha-D-Man}-L-Thr-[protein] + UDP + H(+). The protein operates within protein modification; protein glycosylation. Its function is as follows. Bifunctional glycosyltransferase with both alpha-1,3-xylosyltransferase and beta-1,3-glucuronyltransferase activities involved in the maturation of alpha-dystroglycan (DAG1) by glycosylation leading to DAG1 binding to laminin G-like domain-containing extracellular proteins with high affinity and in a phosphorylated-O-mannosyl trisaccharide dependent manner. Elongates the glucuronyl-beta-1,4-xylose-beta disaccharide primer structure by adding repeating units [-3-Xylose-alpha-1,3-GlcA-beta-1-] to produce a heteropolysaccharide. Supports the maturation of DAG1 more effectively than LARGE1. In addition, can modify both heparan sulfate (HS)- and chondroitin/dermatan sulfate (CS/DS)-proteoglycans (PGs), namely GPC4, with a glycosaminoglycan (GAG)-like polysaccharide composed of xylose and glucuronic acid to confer laminin binding. In Rattus norvegicus (Rat), this protein is Xylosyl- and glucuronyltransferase LARGE2.